The primary structure comprises 407 residues: tRNA(Ile)-lysidine synthase (407 aa).

36-41 contacts ATP; sequence SGGRDS.

This sequence belongs to the tRNA(Ile)-lysidine synthase family.

It is found in the cytoplasm. It carries out the reaction cytidine(34) in tRNA(Ile2) + L-lysine + ATP = lysidine(34) in tRNA(Ile2) + AMP + diphosphate + H(+). Ligates lysine onto the cytidine present at position 34 of the AUA codon-specific tRNA(Ile) that contains the anticodon CAU, in an ATP-dependent manner. Cytidine is converted to lysidine, thus changing the amino acid specificity of the tRNA from methionine to isoleucine. This chain is tRNA(Ile)-lysidine synthase, found in Tropheryma whipplei (strain TW08/27) (Whipple's bacillus).